Here is a 330-residue protein sequence, read N- to C-terminus: G-protein coupled receptor 157 (330 aa).

The Extracellular portion of the chain corresponds to 1-15 (MPTPAPPTELLPWER). The chain crosses the membrane as a helical span at residues 16–36 (AVVLLSCVLSALGSGLLVATH). The Cytoplasmic portion of the chain corresponds to 37-48 (ALWPDLRSRARR). A helical membrane pass occupies residues 49–69 (LLLFLSLADLLSAASYFYGVL). The Extracellular portion of the chain corresponds to 70–87 (QDFAGTSWDCVLQGALST). The chain crosses the membrane as a helical span at residues 88-108 (FANTSSFFWTVAIALYLYLNI). Residues 109 to 119 (VRATRGPCTDH) lie on the Cytoplasmic side of the membrane. Residues 120–140 (LVWAFHLISWGVPLAITVAAV) traverse the membrane as a helical segment. Residues 141 to 166 (CLKKIGYDASDVSVGWCWINLEAEDR) lie on the Extracellular side of the membrane. The chain crosses the membrane as a helical span at residues 167 to 187 (VLWMLLTGKLWEMLAYILLPL). At 188–227 (LYLLVRKHINRAHQALSEYRPIWEGRQLQRGSPTSMADKK) the chain is on the cytoplasmic side. The chain crosses the membrane as a helical span at residues 228–250 (LILIPFIFICLRVWSTVRFVLTL). The Extracellular segment spans residues 251 to 259 (CGSPVVQAP). A helical membrane pass occupies residues 260–282 (VLVVLHGIGNTFQGGANCIMFVL). Over 283–330 (CTRAVRTRLFSLCCCYPRPPTQNPPGASIPPKMGESQESRRTPEVPST) the chain is Cytoplasmic. Residues 303-330 (TQNPPGASIPPKMGESQESRRTPEVPST) are disordered. Basic and acidic residues predominate over residues 317–330 (ESQESRRTPEVPST).

It belongs to the G-protein coupled receptor 2 family.

It localises to the cell projection. Its subcellular location is the cilium membrane. Functionally, orphan receptor that promotes neuronal differentiation of radial glial progenitors (RGPs). The activity of this receptor is mediated by a G(q)-protein that activates a phosphatidylinositol-calcium second messenger. The sequence is that of G-protein coupled receptor 157 (Gpr157) from Rattus norvegicus (Rat).